A 521-amino-acid chain; its full sequence is Type II methyltransferase M.AluI (521 aa).

In terms of domain architecture, SAM-dependent MTase C5-type spans 8–491; that stretch reads YSFVDLFAGI…REHVRRDRAL (484 aa). Cys-84 is an active-site residue.

Belongs to the class I-like SAM-binding methyltransferase superfamily. C5-methyltransferase family.

The enzyme catalyses a 2'-deoxycytidine in DNA + S-adenosyl-L-methionine = a 5-methyl-2'-deoxycytidine in DNA + S-adenosyl-L-homocysteine + H(+). In terms of biological role, a methylase, recognizes the double-stranded sequence 5'-AGCT-3', methylates C-3 on both strands, and protects the DNA from cleavage by the AluI endonuclease. The polypeptide is Type II methyltransferase M.AluI (Cellulosimicrobium cellulans (Arthrobacter luteus)).